The primary structure comprises 206 residues: Ribonuclease HII (206 aa).

The region spanning 27 to 206 is the RNase H type-2 domain; that stretch reads ARIAGVDEAG…CALHRRSFKH (180 aa). A divalent metal cation-binding residues include D33, E34, and D125.

It belongs to the RNase HII family. Mn(2+) is required as a cofactor. The cofactor is Mg(2+).

It localises to the cytoplasm. The catalysed reaction is Endonucleolytic cleavage to 5'-phosphomonoester.. Its function is as follows. Endonuclease that specifically degrades the RNA of RNA-DNA hybrids. The sequence is that of Ribonuclease HII from Moorella thermoacetica (strain ATCC 39073 / JCM 9320).